Reading from the N-terminus, the 328-residue chain is RING finger protein 175 (328 aa).

A run of 5 helical transmembrane segments spans residues 51-71, 83-103, 104-121, 149-169, and 180-200; these read MHVEMILIFLCVLVIAQIVLV, LVTLLQMWVVPLYFTIKLYWW, RFLSMWGMFSVITSYILF, AFGVVGYLAIMFTMCGFNLFF, and GIVSLFYGLYYGVMGRDFAEI. Residues 227–277 form an RING-type; atypical zinc finger; sequence CAVCGQKIIVELDEEGLIENTYQLSCNHVFHEFCIRGWCIVGKKQTCPYCK.

The protein localises to the membrane. This chain is RING finger protein 175 (RNF175), found in Homo sapiens (Human).